A 637-amino-acid polypeptide reads, in one-letter code: Chloride intracellular channel protein 6 (637 aa).

A disordered region spans residues 1–400; the sequence is MAETAEPEGG…EASEEGDPGQ (400 aa). The span at 35–63 shows a compositional bias: low complexity; sequence GPEASEGAAKAPSGEGAGAAAKAGATEEA. S39 is subject to Phosphoserine. Residues 126 to 137 show a composition bias toward basic and acidic residues; sequence CELRGEAAREAE. The segment covering 138–152 has biased composition (low complexity); it reads GQAAAPAAPGAQEEA. A run of 15 repeats spans residues 155-160, 161-166, 167-172, 173-178, 179-184, 185-190, 191-196, 197-202, 203-208, 209-214, 215-220, 221-226, 227-232, 233-238, and 239-244. The 15 X 6 AA tandem repeat of [GEA]-[DGR]-[SN]-[VIM]-D-[AT] stretch occupies residues 155–244; it reads GDSVDAEGSI…SVDAGGSMDA (90 aa). Residues 247-256 are compositionally biased toward gly residues; it reads PAGGAHGAGG. Residues 305–314 show a composition bias toward acidic residues; the sequence is GSEDAAGEDG. Basic and acidic residues predominate over residues 315–332; it reads DQGRPQEETEQQAERQEP. A phosphoserine mark is found at S348 and S393. The G-site motif lies at 420–423; that stretch reads CPFS. The helical transmembrane segment at 422–442 threads the bilayer; that stretch reads FSQRLFMILWLKGVIFNVTTV. Positions 466–637 constitute a GST C-terminal domain; sequence DGDVKTDVNK…AYSDVAKRMK (172 aa).

The protein belongs to the chloride channel CLIC family. As to quaternary structure, monomer (soluble state). Interacts with dopamine receptors DRD2, DRD3 and DRD4. Phosphorylated. As to expression, expressed in brain, chorioretinal, lacrimal glands, submandibular glands, airway epithelium, kidney and gastric mucosa, where it is preferentially expressed in cells that secrete or transport water. In brain, it is highly expressed in choroid plexus. Not detected in pancreas, adrenal glands, heart, skeletal muscle, ileal mucosa, liver and lung.

It localises to the cytoplasm. Its subcellular location is the cell membrane. The catalysed reaction is chloride(in) = chloride(out). Channel activity is redox- and pH-regulated. Inhibited by IAA-94. Functionally, in the soluble state, catalyzes glutaredoxin-like thiol disulfide exchange reactions with reduced glutathione as electron donor. Can insert into membranes and form voltage-dependent chloride-selective channels. The channel opens upon membrane depolarization at positive voltages and closes at negative membrane voltages. May play a critical role in water-secreting cells, possibly through the regulation of chloride ion transport. In Oryctolagus cuniculus (Rabbit), this protein is Chloride intracellular channel protein 6 (CLIC6).